The primary structure comprises 487 residues: Protein nucleotidyltransferase YdiU (487 aa).

ATP is bound by residues G90, G92, R93, K113, D125, G126, R176, and R183. D252 serves as the catalytic Proton acceptor. Positions 253 and 262 each coordinate Mg(2+). D262 is a binding site for ATP.

The protein belongs to the SELO family. Mg(2+) serves as cofactor. Mn(2+) is required as a cofactor.

It carries out the reaction L-seryl-[protein] + ATP = 3-O-(5'-adenylyl)-L-seryl-[protein] + diphosphate. It catalyses the reaction L-threonyl-[protein] + ATP = 3-O-(5'-adenylyl)-L-threonyl-[protein] + diphosphate. The enzyme catalyses L-tyrosyl-[protein] + ATP = O-(5'-adenylyl)-L-tyrosyl-[protein] + diphosphate. The catalysed reaction is L-histidyl-[protein] + UTP = N(tele)-(5'-uridylyl)-L-histidyl-[protein] + diphosphate. It carries out the reaction L-seryl-[protein] + UTP = O-(5'-uridylyl)-L-seryl-[protein] + diphosphate. It catalyses the reaction L-tyrosyl-[protein] + UTP = O-(5'-uridylyl)-L-tyrosyl-[protein] + diphosphate. In terms of biological role, nucleotidyltransferase involved in the post-translational modification of proteins. It can catalyze the addition of adenosine monophosphate (AMP) or uridine monophosphate (UMP) to a protein, resulting in modifications known as AMPylation and UMPylation. The polypeptide is Protein nucleotidyltransferase YdiU (Pseudomonas fluorescens (strain ATCC BAA-477 / NRRL B-23932 / Pf-5)).